Reading from the N-terminus, the 201-residue chain is Proteinase inhibitor type-2 CEVI57 (201 aa).

The first 23 residues, 1-23 (MAVYKVSFLAHLLVLGMYLLVST), serve as a signal peptide directing secretion. 3 repeat units span residues 27 to 83 (ANAC…DPKN), 84 to 143 (PNIC…IEPK), and 144 to 199 (GCTK…QSIS). 8 disulfide bridges follow: C30–C118, C34–C114, C42–C124, C54–C91, C57–C75, C58–C87, C64–C100, and C117–C135.

It belongs to the protease inhibitor I20 (potato type II proteinase inhibitor) family.

The chain is Proteinase inhibitor type-2 CEVI57 (CEVI57) from Solanum lycopersicum (Tomato).